Here is a 141-residue protein sequence, read N- to C-terminus: Galactose-6-phosphate isomerase subunit LacA (141 aa).

It belongs to the LacAB/RpiB family. Heteromultimeric protein consisting of LacA and LacB.

It catalyses the reaction aldehydo-D-galactose 6-phosphate = keto-D-tagatose 6-phosphate. It participates in carbohydrate metabolism; D-galactose 6-phosphate degradation; D-tagatose 6-phosphate from D-galactose 6-phosphate: step 1/1. In Streptococcus pneumoniae serotype 4 (strain ATCC BAA-334 / TIGR4), this protein is Galactose-6-phosphate isomerase subunit LacA.